A 478-amino-acid chain; its full sequence is ATP synthase subunit beta (478 aa).

Residue 151–158 (GGAGVGKT) participates in ATP binding.

This sequence belongs to the ATPase alpha/beta chains family. F-type ATPases have 2 components, CF(1) - the catalytic core - and CF(0) - the membrane proton channel. CF(1) has five subunits: alpha(3), beta(3), gamma(1), delta(1), epsilon(1). CF(0) has three main subunits: a(1), b(2) and c(9-12). The alpha and beta chains form an alternating ring which encloses part of the gamma chain. CF(1) is attached to CF(0) by a central stalk formed by the gamma and epsilon chains, while a peripheral stalk is formed by the delta and b chains.

The protein resides in the cell inner membrane. It carries out the reaction ATP + H2O + 4 H(+)(in) = ADP + phosphate + 5 H(+)(out). Functionally, produces ATP from ADP in the presence of a proton gradient across the membrane. The catalytic sites are hosted primarily by the beta subunits. The chain is ATP synthase subunit beta from Xanthobacter autotrophicus (strain ATCC BAA-1158 / Py2).